Consider the following 258-residue polypeptide: Short-chain dehydrogenase/reductase aba4 (258 aa).

Positions 20, 66, and 130 each coordinate NADP(+). Catalysis depends on proton donor residues serine 146 and tyrosine 160. Tyrosine 160, lysine 164, isoleucine 193, and threonine 195 together coordinate NADP(+). The active-site Lowers pKa of active site Tyr is lysine 164.

Belongs to the short-chain dehydrogenases/reductases (SDR) family.

Its pathway is hormone biosynthesis. Functionally, short-chain dehydrogenase/reductase; part of the gene cluster that mediates the biosynthesis of abscisic acid (ABA), a phytohormone that acts antagonistically toward salicylic acid (SA), jasmonic acid (JA) and ethylene (ETH) signaling, to impede plant defense responses. The first step of the pathway catalyzes the reaction from farnesyl diphosphate to alpha-ionylideneethane performed by the alpha-ionylideneethane synthase aba3 via a three-step reaction mechanism involving 2 neutral intermediates, beta-farnesene and allofarnesene. The cytochrome P450 monooxygenase aba1 might then be involved in the conversion of alpha-ionylideneethane to alpha-ionylideneacetic acid. Alpha-ionylideneacetic acid is further converted to abscisic acid in 2 steps involving the cytochrome P450 monooxygenase aba2 and the short-chain dehydrogenase/reductase aba4, via the intermediates 1'-deoxy-ABA or 1',4'-trans-diol-ABA, depending on the order of action of these 2 enzymes. Aba2 is responsible for the hydroxylation of carbon atom C-1' and aba4 might be involved in the oxidation of the C-4' carbon atom. This is Short-chain dehydrogenase/reductase aba4 from Botryotinia fuckeliana (Noble rot fungus).